The following is a 356-amino-acid chain: MTDRKNGLTYADAGVDIDAGNRLVDLIKPMVRATARAGADAEIGGFGGLFDLKAAGFTDPVLVAANDGVGTKVKIAIETGIHDTIGIDLVAMSVNDLVVQGAEPLFFLDYFACGKLDPEVASAIVAGIAVGCREAGCALIGGETAEMPGLYKDGDYDLAGFAVGAAERGTLLPGRDIAAGDAVIGLASSGVHSNGYSLVRKIVEASGLGFSVPAPFAPVTTLGGALLTPTRLYVKSCLRAIRETGAVKGLAHITGGGFTDNIPRVLPKHLGIRIDLSRLTVLPVFKWLARQGGIAELELLRTFNCGVGMIAIVRRDAVEQVVDVLTQAGERVAPLGSVIEASGDRVVYDNHLDLAM.

This sequence belongs to the AIR synthase family.

It localises to the cytoplasm. It catalyses the reaction 2-formamido-N(1)-(5-O-phospho-beta-D-ribosyl)acetamidine + ATP = 5-amino-1-(5-phospho-beta-D-ribosyl)imidazole + ADP + phosphate + H(+). The protein operates within purine metabolism; IMP biosynthesis via de novo pathway; 5-amino-1-(5-phospho-D-ribosyl)imidazole from N(2)-formyl-N(1)-(5-phospho-D-ribosyl)glycinamide: step 2/2. This Nitrobacter hamburgensis (strain DSM 10229 / NCIMB 13809 / X14) protein is Phosphoribosylformylglycinamidine cyclo-ligase.